Reading from the N-terminus, the 252-residue chain is MSDWNPSLYLHFAAERSRPAVELLARVPLENIKYVADLGCGPGNSTALLHQRWPAARITGIDSSPAMIAEARSALPDCQFVEADIRNWQPEQALDLIFANASLQWLPDHYELFPHLVSLLNPQGVLAVQMPDNWLEPTHVLMREVAWEQNYPDRGREPLAGVHAYYDILSEAGCEVDIWRTTYYHQMPSHQAIIDWVTATGLRPWLQDLTESEQQLFLTRYHQMLEEQYPLQENEQILLAFPRLFIVARRTE.

It belongs to the methyltransferase superfamily. Tam family.

Its subcellular location is the cytoplasm. It catalyses the reaction trans-aconitate + S-adenosyl-L-methionine = (E)-3-(methoxycarbonyl)pent-2-enedioate + S-adenosyl-L-homocysteine. Catalyzes the S-adenosylmethionine monomethyl esterification of trans-aconitate. The polypeptide is Trans-aconitate 2-methyltransferase (Escherichia coli (strain SE11)).